The sequence spans 553 residues: 5'-nucleotidase (553 aa).

Positions 1–21 (MKQGLILKSVLSAAIIASLAG) are cleaved as a signal peptide. Cys-22 carries the N-palmitoyl cysteine lipid modification. Cys-22 carries S-diacylglycerol cysteine lipidation. Asp-45, His-47, Asp-88, Asn-120, His-221, His-256, and Gln-258 together coordinate a divalent metal cation. Residues Phe-432 and 501–507 (FNAAGGD) each bind substrate.

The protein belongs to the 5'-nucleotidase family. Chloride is required as a cofactor. The cofactor is Mg(2+).

The protein resides in the cell outer membrane. The catalysed reaction is a ribonucleoside 5'-phosphate + H2O = a ribonucleoside + phosphate. Its function is as follows. Degradation of extracellular 5'-nucleotides for nutritional needs. The protein is 5'-nucleotidase (nutA) of Vibrio cholerae serotype O1 (strain ATCC 39315 / El Tor Inaba N16961).